Here is a 37-residue protein sequence, read N- to C-terminus: Cytochrome b6-f complex subunit 5 (37 aa).

The helical transmembrane segment at 5 to 25 (LLSGIVLGLIVVTLAGLFYAA) threads the bilayer.

The protein belongs to the PetG family. As to quaternary structure, the 4 large subunits of the cytochrome b6-f complex are cytochrome b6, subunit IV (17 kDa polypeptide, PetD), cytochrome f and the Rieske protein, while the 4 small subunits are PetG, PetL, PetM and PetN. The complex functions as a dimer.

The protein localises to the cellular thylakoid membrane. Its function is as follows. Component of the cytochrome b6-f complex, which mediates electron transfer between photosystem II (PSII) and photosystem I (PSI), cyclic electron flow around PSI, and state transitions. PetG is required for either the stability or assembly of the cytochrome b6-f complex. This chain is Cytochrome b6-f complex subunit 5, found in Anabaena variabilis.